Consider the following 793-residue polypeptide: Nuclear cap-binding protein subunit 1 (793 aa).

Disordered stretches follow at residues 1–30 and 668–692; these read MSRR…SEIE and LARQ…GPLE. Residues 30 to 242 form the MIF4G domain; the sequence is EERLESLICR…CLWSQIQKLK (213 aa). The segment covering 683–692 has biased composition (basic and acidic residues); sequence SSDREDGPLE. Residues 686–716 are a coiled coil; the sequence is REDGPLEEQIERLQEKVESAQSEQKNLFLVI.

This sequence belongs to the NCBP1 family. In terms of assembly, component of the nuclear cap-binding complex (CBC), a heterodimer composed of NCBP1/CBP80 and NCBP2/CBP20 that interacts with m7GpppG-capped RNA. Component of an alternative nuclear cap-binding complex (CBC) composed of NCBP1/CBP80 and NCBP3.

The protein localises to the nucleus. Its subcellular location is the cytoplasm. In terms of biological role, component of the cap-binding complex (CBC), which binds cotranscriptionally to the 5'-cap of pre-mRNAs and is involved in various processes such as pre-mRNA splicing, translation regulation, nonsense-mediated mRNA decay, RNA-mediated gene silencing (RNAi) by microRNAs (miRNAs) and mRNA export. The CBC complex is involved in mRNA export from the nucleus, leading to the recruitment of the mRNA export machinery to the 5'-end of mRNA and to mRNA export in a 5' to 3' direction through the nuclear pore. The CBC complex is also involved in mediating U snRNA and intronless mRNAs export from the nucleus. The CBC complex is essential for a pioneer round of mRNA translation, before steady state translation when the CBC complex is replaced by cytoplasmic cap-binding protein eIF4E. The pioneer round of mRNA translation mediated by the CBC complex plays a central role in nonsense-mediated mRNA decay (NMD), NMD only taking place in mRNAs bound to the CBC complex, but not on eIF4E-bound mRNAs. The CBC complex enhances NMD in mRNAs containing at least one exon-junction complex (EJC), promoting the interaction between UPF1 and UPF2. The CBC complex is also involved in 'failsafe' NMD, which is independent of the EJC complex, while it does not participate in Staufen-mediated mRNA decay (SMD). During cell proliferation, the CBC complex is also involved in microRNAs (miRNAs) biogenesis via its interaction with SRRT/ARS2 and is required for miRNA-mediated RNA interference. The CBC complex also acts as a negative regulator of PARN, thereby acting as an inhibitor of mRNA deadenylation. In the CBC complex, NCBP1/CBP80 does not bind directly capped RNAs (m7GpppG-capped RNA) but is required to stabilize the movement of the N-terminal loop of NCBP2/CBP20 and lock the CBC into a high affinity cap-binding state with the cap structure. Associates with NCBP3 to form an alternative cap-binding complex (CBC) which plays a key role in mRNA export. The conventional CBC with NCBP2 binds both small nuclear RNA (snRNA) and messenger (mRNA) and is involved in their export from the nucleus whereas the alternative CBC with NCBP3 does not bind snRNA and associates only with mRNA thereby playing a role only in mRNA export. The polypeptide is Nuclear cap-binding protein subunit 1 (NCBP1) (Gallus gallus (Chicken)).